The sequence spans 492 residues: N-succinylglutamate 5-semialdehyde dehydrogenase (492 aa).

220–225 (GSASTG) is a binding site for NAD(+). Residues Glu243 and Cys277 contribute to the active site.

Belongs to the aldehyde dehydrogenase family. AstD subfamily.

It catalyses the reaction N-succinyl-L-glutamate 5-semialdehyde + NAD(+) + H2O = N-succinyl-L-glutamate + NADH + 2 H(+). Its pathway is amino-acid degradation; L-arginine degradation via AST pathway; L-glutamate and succinate from L-arginine: step 4/5. In terms of biological role, catalyzes the NAD-dependent reduction of succinylglutamate semialdehyde into succinylglutamate. The polypeptide is N-succinylglutamate 5-semialdehyde dehydrogenase (Salmonella enteritidis PT4 (strain P125109)).